Here is a 132-residue protein sequence, read N- to C-terminus: Ribonuclease P protein component 2 (132 aa).

The protein belongs to the eukaryotic/archaeal RNase P protein component 2 family. Consists of a catalytic RNA component and at least 4-5 protein subunits.

The protein resides in the cytoplasm. It catalyses the reaction Endonucleolytic cleavage of RNA, removing 5'-extranucleotides from tRNA precursor.. Its function is as follows. Part of ribonuclease P, a protein complex that generates mature tRNA molecules by cleaving their 5'-ends. This chain is Ribonuclease P protein component 2, found in Methanosarcina acetivorans (strain ATCC 35395 / DSM 2834 / JCM 12185 / C2A).